A 34-amino-acid chain; its full sequence is Phalloidin proprotein (34 aa).

The propeptide occupies 1–10 (MSDINASRLP). A cross-link (cyclopeptide (Ala-Pro)) is located at residues 11 to 17 (AWLATCP). A cross-link (2'-cysteinyl-6'-hydroxytryptophan sulfoxide (Trp-Cys)) is located at residues 12–16 (WLATC). A propeptide spanning residues 18-34 (CVGDDVNPTLSRGESLC) is cleaved from the precursor.

The protein belongs to the MSDIN fungal toxin family. Post-translationally, processed by the macrocyclase-peptidase enzyme POPB to yield a toxic cyclic heptapeptide. POPB first removes 10 residues from the N-terminus. Conformational trapping of the remaining peptide forces the enzyme to release this intermediate rather than proceed to macrocyclization. The enzyme rebinds the remaining peptide in a different conformation and catalyzes macrocyclization of the N-terminal 7 residues.

In terms of biological role, toxin that belongs to the bicyclic heptapeptides called phallotoxins. Although structurally related to amatoxins, phallotoxins have a different mode of action, which is the stabilization of F-actin. Phallotoxins are poisonous when administered parenterally, but not orally because of poor absorption. The polypeptide is Phalloidin proprotein (Amanita phalloides (Death cap)).